The primary structure comprises 302 residues: uncharacterized protein (302 aa).

Residue E48 is part of the active site.

It belongs to the PhzF family.

This is an uncharacterized protein from Clostridium acetobutylicum (strain ATCC 824 / DSM 792 / JCM 1419 / IAM 19013 / LMG 5710 / NBRC 13948 / NRRL B-527 / VKM B-1787 / 2291 / W).